Here is a 113-residue protein sequence, read N- to C-terminus: Cell cycle protein GpsB (113 aa).

The stretch at 37–63 forms a coiled coil; it reads KDYETYATLVKSLRQEIADLKEELTRK. Residues 61–82 form a disordered region; it reads TRKPQVSSAPSPSHPDPIDVAA.

The protein belongs to the GpsB family. In terms of assembly, forms polymers through the coiled coil domains. Interacts with PBP1, MreC and EzrA.

It is found in the cytoplasm. Its function is as follows. Divisome component that associates with the complex late in its assembly, after the Z-ring is formed, and is dependent on DivIC and PBP2B for its recruitment to the divisome. Together with EzrA, is a key component of the system that regulates PBP1 localization during cell cycle progression. Its main role could be the removal of PBP1 from the cell pole after pole maturation is completed. Also contributes to the recruitment of PBP1 to the division complex. Not essential for septum formation. The polypeptide is Cell cycle protein GpsB (Streptococcus pneumoniae (strain ATCC 700669 / Spain 23F-1)).